The sequence spans 262 residues: ATP synthase subunit a (262 aa).

5 helical membrane passes run 24 to 44, 85 to 105, 129 to 149, 194 to 214, and 228 to 248; these read AVHL…LVVF, IAPL…IDLV, DISA…FYTV, LFGN…MYMA, and LVWA…FMML.

The protein belongs to the ATPase A chain family. F-type ATPases have 2 components, CF(1) - the catalytic core - and CF(0) - the membrane proton channel. CF(1) has five subunits: alpha(3), beta(3), gamma(1), delta(1), epsilon(1). CF(0) has three main subunits: a(1), b(2) and c(9-12). The alpha and beta chains form an alternating ring which encloses part of the gamma chain. CF(1) is attached to CF(0) by a central stalk formed by the gamma and epsilon chains, while a peripheral stalk is formed by the delta and b chains.

It localises to the cell inner membrane. Key component of the proton channel; it plays a direct role in the translocation of protons across the membrane. In Haemophilus ducreyi (strain 35000HP / ATCC 700724), this protein is ATP synthase subunit a.